The following is a 441-amino-acid chain: Collagen alpha-1(XXVI) chain (441 aa).

An N-terminal signal peptide occupies residues 1–20; sequence MKLALLLPWACCCLCGSALA. One can recognise an EMI domain in the interval 52 to 128; it reads RRHWCHHTVT…PGFTGSNCDE (77 aa). Cystine bridges form between C56-C118, C83-C89, and C117-C126. N70 carries N-linked (GlcNAc...) asparagine glycosylation. Residue N132 is glycosylated (N-linked (GlcNAc...) asparagine). Disordered stretches follow at residues 156-362 and 390-441; these read AERP…AEGE and PLAS…SSRK. 2 consecutive Collagen-like domains span residues 199–267 and 302–355; these read GPAG…PGPS and GVPG…EGEK. Composition is skewed to pro residues over residues 200-215, 231-243, 252-269, and 306-327; these read PAGP…PAGP, AGPP…PGPR, PGPP…PSPN, and PRGP…PPGT. Positions 348–357 are enriched in basic and acidic residues; sequence VKGEEGEKAA.

In terms of assembly, homotrimer or heterotrimer. In terms of processing, hydroxylated on proline residues.

Its subcellular location is the secreted. It localises to the extracellular space. The protein resides in the extracellular matrix. This Homo sapiens (Human) protein is Collagen alpha-1(XXVI) chain (COL26A1).